Consider the following 477-residue polypeptide: UDP-N-acetylmuramate--L-alanine ligase (477 aa).

Residue Gly-125–Thr-131 participates in ATP binding.

The protein belongs to the MurCDEF family.

It localises to the cytoplasm. It carries out the reaction UDP-N-acetyl-alpha-D-muramate + L-alanine + ATP = UDP-N-acetyl-alpha-D-muramoyl-L-alanine + ADP + phosphate + H(+). It participates in cell wall biogenesis; peptidoglycan biosynthesis. Cell wall formation. The chain is UDP-N-acetylmuramate--L-alanine ligase from Acidothermus cellulolyticus (strain ATCC 43068 / DSM 8971 / 11B).